A 62-amino-acid polypeptide reads, in one-letter code: Andropin (62 aa).

Positions 1-22 (MKYFSVLVVLTLILAIVDQSDA) are cleaved as a signal peptide.

This sequence belongs to the andropin family. In terms of tissue distribution, ejaculatory duct of adult males.

The protein localises to the secreted. Male-specific peptide with moderate activity against Gram-positive bacteria. This is Andropin (Anp) from Drosophila teissieri (Fruit fly).